Consider the following 357-residue polypeptide: Peptide chain release factor 1 (357 aa).

Glutamine 235 carries the post-translational modification N5-methylglutamine. Positions 285-305 (KRHNEASAMRSAQVGSGDRSE) are disordered.

It belongs to the prokaryotic/mitochondrial release factor family. In terms of processing, methylated by PrmC. Methylation increases the termination efficiency of RF1.

It localises to the cytoplasm. Peptide chain release factor 1 directs the termination of translation in response to the peptide chain termination codons UAG and UAA. In Chlamydia pneumoniae (Chlamydophila pneumoniae), this protein is Peptide chain release factor 1 (prfA).